Reading from the N-terminus, the 206-residue chain is Large ribosomal subunit protein uL4 (206 aa).

A disordered region spans residues 48-97 (THAVKNRSLVSGGGKKPWKQKHTGRARQGSTRASQWVGGGKAMGPKPRDY). A compositionally biased stretch (basic residues) spans 63–72 (KPWKQKHTGR).

The protein belongs to the universal ribosomal protein uL4 family. As to quaternary structure, part of the 50S ribosomal subunit.

One of the primary rRNA binding proteins, this protein initially binds near the 5'-end of the 23S rRNA. It is important during the early stages of 50S assembly. It makes multiple contacts with different domains of the 23S rRNA in the assembled 50S subunit and ribosome. Its function is as follows. Forms part of the polypeptide exit tunnel. The sequence is that of Large ribosomal subunit protein uL4 from Anaeromyxobacter sp. (strain K).